The chain runs to 514 residues: Na(+)/H(+) antiporter NhaB (514 aa).

A run of 11 helical transmembrane segments spans residues 21 to 41 (LAIV…SPFI), 43 to 63 (GWLL…CYPL), 88 to 108 (IMAN…IFFM), 143 to 163 (FLDA…FYGV), 203 to 223 (LMMH…VGEP), 239 to 259 (FFLR…LTCF), 304 to 324 (ALIA…VGLI), 349 to 369 (QESL…AVII), 390 to 410 (LALF…VFVA), 448 to 468 (ATPN…SPLI), and 484 to 504 (IVLS…ATIW).

Belongs to the NhaB Na(+)/H(+) (TC 2.A.34) antiporter family.

It is found in the cell inner membrane. The enzyme catalyses 2 Na(+)(in) + 3 H(+)(out) = 2 Na(+)(out) + 3 H(+)(in). In terms of biological role, na(+)/H(+) antiporter that extrudes sodium in exchange for external protons. In Haemophilus influenzae (strain 86-028NP), this protein is Na(+)/H(+) antiporter NhaB.